Here is a 169-residue protein sequence, read N- to C-terminus: MELNPGAPAVVADSANGARKWSGKVHALLPNTKPEQAWTLLKDFINLHKVMPSLSVCELVEGEANVVGCVRYVKGIMHPIEEEFWAKEKLVALDNKNMSYSYIFTECFTGYEDYTATMQIVEGPEHKGSRFDWSFQCKYIEGMTESAFTEILQHWATEIGQKIEEVCSA.

A propeptide spanning residues 1-12 (MELNPGAPAVVA) is cleaved from the precursor. Residues glutamate 88 and tyrosine 102 each act as proton donor/acceptor in the active site.

It is found in the vacuole. It catalyses the reaction (E)-prop-1-en-1-SO-peroxol = (Z)-propanethial S-oxide. The catalysed reaction is (E)-alk-1-en-1-SO-peroxol = (Z)-alkanethial oxide. Functionally, produces lacrymatory factor (propanthial S-oxide) from 1-propenylsulphenic acid, an unstable compound resulting from the degradation of trans-1-propenyl-L-cysteine sulphoxide (PRENCSO) by alliinase. The polypeptide is Lachrymatory-factor synthase (Allium cepa (Onion)).